The chain runs to 201 residues: GTP cyclohydrolase 1 (201 aa).

Cysteine 90, histidine 93, and cysteine 163 together coordinate Zn(2+).

The protein belongs to the GTP cyclohydrolase I family. As to quaternary structure, toroid-shaped homodecamer, composed of two pentamers of five dimers.

It catalyses the reaction GTP + H2O = 7,8-dihydroneopterin 3'-triphosphate + formate + H(+). Its pathway is cofactor biosynthesis; 7,8-dihydroneopterin triphosphate biosynthesis; 7,8-dihydroneopterin triphosphate from GTP: step 1/1. In Streptomyces coelicolor (strain ATCC BAA-471 / A3(2) / M145), this protein is GTP cyclohydrolase 1 (folE).